The following is a 155-amino-acid chain: Small ribosomal subunit protein uS7 (155 aa).

It belongs to the universal ribosomal protein uS7 family. In terms of assembly, part of the 30S ribosomal subunit. Contacts proteins S9 and S11.

Functionally, one of the primary rRNA binding proteins, it binds directly to 16S rRNA where it nucleates assembly of the head domain of the 30S subunit. Is located at the subunit interface close to the decoding center, probably blocks exit of the E-site tRNA. This Mycoplasma mycoides subsp. mycoides SC (strain CCUG 32753 / NCTC 10114 / PG1) protein is Small ribosomal subunit protein uS7.